The sequence spans 571 residues: Quinone-dependent D-lactate dehydrogenase (571 aa).

Residues 42–213 (GQGDALAVVF…SKLDDDRIKD (172 aa)) enclose the FAD-binding PCMH-type domain. FAD is bound by residues 76-80 (AANTG), 84-85 (GS), Gly-143, Ser-150, Gly-160, and Val-262. A disordered region spans residues 546–571 (RENDPTNSMNPGIGKTSKRKNWQEVE).

The protein belongs to the quinone-dependent D-lactate dehydrogenase family. The cofactor is FAD.

The protein localises to the cell inner membrane. It carries out the reaction (R)-lactate + a quinone = a quinol + pyruvate. Inhibited by 2-hydroxy-3-butynoic acid, but not by p-chloromercuribenzoate, n-ethylmaleimide, or 5,5'-dithiobis(2-nitrobenzoic acid). Its function is as follows. Catalyzes the oxidation of D-lactate to pyruvate. Electrons derived from D-lactate oxidation are transferred to the ubiquinone/cytochrome electron transfer chain, where they may be used to provide energy for the active transport of a variety of amino acids and sugars across the membrane. The chain is Quinone-dependent D-lactate dehydrogenase from Escherichia coli (strain K12).